The primary structure comprises 429 residues: Histidine--tRNA ligase (429 aa).

Belongs to the class-II aminoacyl-tRNA synthetase family. As to quaternary structure, homodimer.

It is found in the cytoplasm. The catalysed reaction is tRNA(His) + L-histidine + ATP = L-histidyl-tRNA(His) + AMP + diphosphate + H(+). In Streptococcus mutans serotype c (strain ATCC 700610 / UA159), this protein is Histidine--tRNA ligase.